The sequence spans 623 residues: Pheromone-processing carboxypeptidase KEX1 (623 aa).

Residues 1–16 form the signal peptide; that stretch reads MLKLLCLLLPLVAVSA. The Lumenal segment spans residues 17–512; sequence SPIDLGSQKD…TDDSAAHGNP (496 aa). A glycan (N-linked (GlcNAc...) asparagine) is linked at Asn54. Ser177 is an active-site residue. A glycan (N-linked (GlcNAc...) asparagine) is linked at Asn258. Residue Asp383 is part of the active site. N-linked (GlcNAc...) asparagine glycans are attached at residues Asn430 and Asn438. The active site involves His441. Residues Asn469 and Asn483 are each glycosylated (N-linked (GlcNAc...) asparagine). The chain crosses the membrane as a helical span at residues 513 to 533; sequence FFYYVFELFVIVLLLCGLVYL. Residues 534–623 are Cytoplasmic-facing; sequence YQYYSNSAPH…EMDSHGTSEK (90 aa). The tract at residues 597–623 is disordered; sequence QEPYKPLDKGANADLDIEMDSHGTSEK.

This sequence belongs to the peptidase S10 family.

The protein resides in the golgi apparatus. Its subcellular location is the trans-Golgi network membrane. It carries out the reaction Preferential release of a C-terminal arginine or lysine residue.. In terms of biological role, protease with a carboxypeptidase B-like function involved in the C-terminal processing of the lysine and arginine residues from protein precursors. Promotes cell fusion and is involved in the programmed cell death. In Komagataella phaffii (strain GS115 / ATCC 20864) (Yeast), this protein is Pheromone-processing carboxypeptidase KEX1 (KEX1).